Reading from the N-terminus, the 335-residue chain is Autophagy-related protein 21 (335 aa).

WD repeat units lie at residues 165-205 (CHSS…LVTE) and 210-249 (YIPA…SDPN).

It belongs to the WD repeat PROPPIN family.

The protein resides in the cytoplasm. It localises to the golgi apparatus. It is found in the golgi stack membrane. Its subcellular location is the vacuole membrane. The protein localises to the preautophagosomal structure membrane. In terms of biological role, required for cytoplasm to vacuole transport (Cvt) vesicles formation and autophagy. Has a role in sporulation. The sequence is that of Autophagy-related protein 21 (mug179) from Schizosaccharomyces pombe (strain 972 / ATCC 24843) (Fission yeast).